We begin with the raw amino-acid sequence, 119 residues long: Large ribosomal subunit protein bL20 (119 aa).

Belongs to the bacterial ribosomal protein bL20 family.

Functionally, binds directly to 23S ribosomal RNA and is necessary for the in vitro assembly process of the 50S ribosomal subunit. It is not involved in the protein synthesizing functions of that subunit. The polypeptide is Large ribosomal subunit protein bL20 (Neisseria gonorrhoeae (strain ATCC 700825 / FA 1090)).